Reading from the N-terminus, the 361-residue chain is Glutamine synthetase (361 aa).

In terms of domain architecture, GS beta-grasp spans 23–103 (CQAMYIWVDG…VLCETYKYNK (81 aa)). One can recognise a GS catalytic domain in the interval 110–361 (QRWKCMEVMT…LVRTICLNEQ (252 aa)). E131 contacts ATP. The Mn(2+) site is built by E131, E133, and E200. 200-205 (EFQVGP) is a binding site for ATP. 243-244 (DW) contacts L-glutamate. H250 serves as a coordination point for Mn(2+). ATP contacts are provided by residues 252–254 (NFS), R316, and R321. L-glutamate is bound at residue R316. 333–335 (YLE) lines the ADP pocket. E335 is a Mn(2+) binding site. R337 provides a ligand contact to L-glutamate.

The protein belongs to the glutamine synthetase family. Mg(2+) is required as a cofactor. The cofactor is Mn(2+).

Its subcellular location is the cytoplasm. It is found in the cytosol. The protein resides in the microsome. It localises to the mitochondrion. The catalysed reaction is L-glutamate + NH4(+) + ATP = L-glutamine + ADP + phosphate + H(+). Glutamine synthetase that catalyzes the ATP-dependent conversion of glutamate and ammonia to glutamine. The protein is Glutamine synthetase of Panulirus argus (Caribbean spiny lobster).